Consider the following 190-residue polypeptide: Imidazoleglycerol-phosphate dehydratase (190 aa).

It belongs to the imidazoleglycerol-phosphate dehydratase family.

The protein resides in the cytoplasm. It catalyses the reaction D-erythro-1-(imidazol-4-yl)glycerol 3-phosphate = 3-(imidazol-4-yl)-2-oxopropyl phosphate + H2O. Its pathway is amino-acid biosynthesis; L-histidine biosynthesis; L-histidine from 5-phospho-alpha-D-ribose 1-diphosphate: step 6/9. This chain is Imidazoleglycerol-phosphate dehydratase, found in Campylobacter fetus subsp. fetus (strain 82-40).